The following is a 509-amino-acid chain: Putative thymidine phosphorylase (509 aa).

Belongs to the thymidine/pyrimidine-nucleoside phosphorylase family. Type 2 subfamily.

The enzyme catalyses thymidine + phosphate = 2-deoxy-alpha-D-ribose 1-phosphate + thymine. This Bradyrhizobium sp. (strain ORS 278) protein is Putative thymidine phosphorylase.